The following is a 383-amino-acid chain: S-adenosylmethionine synthase (383 aa).

An ATP-binding site is contributed by His-15. Asp-17 is a Mg(2+) binding site. Glu-43 is a binding site for K(+). L-methionine is bound by residues Glu-56 and Gln-99. Residues 99–109 (QSPDINQGVDK) form a flexible loop region. Residues 164 to 166 (DAK), 230 to 231 (RF), Asp-239, 245 to 246 (RK), Ala-262, and Lys-266 contribute to the ATP site. Position 239 (Asp-239) interacts with L-methionine. Lys-270 is a binding site for L-methionine.

This sequence belongs to the AdoMet synthase family. As to quaternary structure, homotetramer; dimer of dimers. Requires Mg(2+) as cofactor. The cofactor is K(+).

It is found in the cytoplasm. The catalysed reaction is L-methionine + ATP + H2O = S-adenosyl-L-methionine + phosphate + diphosphate. The protein operates within amino-acid biosynthesis; S-adenosyl-L-methionine biosynthesis; S-adenosyl-L-methionine from L-methionine: step 1/1. In terms of biological role, catalyzes the formation of S-adenosylmethionine (AdoMet) from methionine and ATP. The overall synthetic reaction is composed of two sequential steps, AdoMet formation and the subsequent tripolyphosphate hydrolysis which occurs prior to release of AdoMet from the enzyme. This is S-adenosylmethionine synthase from Vibrio atlanticus (strain LGP32) (Vibrio splendidus (strain Mel32)).